Here is a 93-residue protein sequence, read N- to C-terminus: Alpha-defensin 1 (93 aa).

Positions 1–19 are cleaved as a signal peptide; the sequence is MKKLVLLFALVLLGFQVQA. A propeptide spanning residues 20–58 is cleaved from the precursor; sequence DSIQNTDEETKTEEQPGEEDQAVSVSFGDPEGTSLQEES. The interval 24 to 54 is disordered; it reads NTDEETKTEEQPGEEDQAVSVSFGDPEGTSL. Disulfide bonds link cysteine 64-cysteine 92, cysteine 66-cysteine 81, and cysteine 71-cysteine 91.

It belongs to the alpha-defensin family. Paneth cells of the small bowel.

Its subcellular location is the secreted. Its function is as follows. Probably contributes to the antimicrobial barrier function of the small bowel mucosa. Has antibacterial activity against attenuated mutants of S.typhimurium. This chain is Alpha-defensin 1 (Defa1), found in Mus musculus (Mouse).